Consider the following 118-residue polypeptide: Large ribosomal subunit protein bL20 (118 aa).

Belongs to the bacterial ribosomal protein bL20 family.

Binds directly to 23S ribosomal RNA and is necessary for the in vitro assembly process of the 50S ribosomal subunit. It is not involved in the protein synthesizing functions of that subunit. This is Large ribosomal subunit protein bL20 from Syntrophotalea carbinolica (strain DSM 2380 / NBRC 103641 / GraBd1) (Pelobacter carbinolicus).